The following is a 265-amino-acid chain: 4-hydroxy-tetrahydrodipicolinate reductase (265 aa).

NAD(+)-binding positions include 7 to 12 (GASGRM) and Asp33. Residue Arg34 coordinates NADP(+). NAD(+) contacts are provided by residues 96-98 (GTT) and 120-123 (AANM). Catalysis depends on His153, which acts as the Proton donor/acceptor. His154 is a binding site for (S)-2,3,4,5-tetrahydrodipicolinate. The active-site Proton donor is the Lys157. 163–164 (GT) is a binding site for (S)-2,3,4,5-tetrahydrodipicolinate.

It belongs to the DapB family.

It is found in the cytoplasm. The catalysed reaction is (S)-2,3,4,5-tetrahydrodipicolinate + NAD(+) + H2O = (2S,4S)-4-hydroxy-2,3,4,5-tetrahydrodipicolinate + NADH + H(+). It carries out the reaction (S)-2,3,4,5-tetrahydrodipicolinate + NADP(+) + H2O = (2S,4S)-4-hydroxy-2,3,4,5-tetrahydrodipicolinate + NADPH + H(+). The protein operates within amino-acid biosynthesis; L-lysine biosynthesis via DAP pathway; (S)-tetrahydrodipicolinate from L-aspartate: step 4/4. In terms of biological role, catalyzes the conversion of 4-hydroxy-tetrahydrodipicolinate (HTPA) to tetrahydrodipicolinate. The polypeptide is 4-hydroxy-tetrahydrodipicolinate reductase (Burkholderia multivorans (strain ATCC 17616 / 249)).